Consider the following 40-residue polypeptide: Competence and sporulation stimulating factor (40 aa).

Positions 1–35 are excised as a propeptide; the sequence is MKLKSKLFVICLAAAAIFTAAGVSANAEALDFHVT.

Belongs to the Phr family. As to quaternary structure, interacts with RapC and inhibits its interaction with ComA. Post-translationally, secreted with a propeptide domain, which is cleaved in the cell wall by the secreted serine proteases subtilisin, Epr and Vpr to produce a mature signaling peptide. Contains a predicted signal peptide cleavage site in the N-terminal region, however the propeptide is probably subject to only one processing event, at the N-terminal end of the mature peptide.

It is found in the secreted. It localises to the cytoplasm. The protein resides in the host cell. Signaling molecule that serves as a cell density signal for both genetic competence development and sporulation. Secreted during production, but the mature peptide acts intracellularly, indicating that it needs to be imported into the cell to function. At low concentrations, CSF stimulates expression of the genes controlled by ComA, a transcriptional factor that regulates the development of genetic competence. It includes the srfA operon, which encodes a small protein, ComS, required for competence development, and the surfactin biosynthetic enzymes. Acts by inhibiting RapC, which regulates the activity of ComA. At high concentrations, it inhibits expression of those same ComA-controlled genes, maybe by inhibiting activity of the kinase ComP. In addition, high concentrations of CSF can stimulate sporulation under some conditions. Also inhibits RapB activity, with lower efficiency, but does not act on RapA. Is probably involved in the quorum sensing control of sporulation. CSF is a species-specific signaling molecule that partially compensates for the lack of ComX-mediated communication between different strains of B.subtilis. Functionally, b.subtilis is a well-characterized soil and water saprophyte, but it is also found in enteric flora of many species, including humans. In this environment, CSF can be transported into human intestinal epithelia via OCTN2, a host cell membrane transporter, and can induce cytoprotective heat shock proteins contributing to intestinal homeostasis. Its function is as follows. In addition, in non-domesticated swarming strains of B.subtilis, the residual propeptide exposed on the exterior of the cytoplasmic membrane may have an extracellular role in swarming. This function is probably not dependent on CSF. This chain is Competence and sporulation stimulating factor, found in Bacillus subtilis (strain 168).